A 105-amino-acid polypeptide reads, in one-letter code: uncharacterized protein (105 aa).

Residues 2 to 42 (QVLIGTKLVTEGIDIKQLMMVIMLDNRLNIIELIQGVGRLR) enclose the Helicase C-terminal domain.

The protein belongs to the helicase family. Yeast subtelomeric Y' repeat subfamily.

This is an uncharacterized protein from Saccharomyces cerevisiae (strain ATCC 204508 / S288c) (Baker's yeast).